Here is a 555-residue protein sequence, read N- to C-terminus: Phosphomethylpyrimidine synthase (555 aa).

The interval 78-104 (VRDRWGFDNGSAESTKGELSMSERKPR) is disordered. Residues N191, M220, Y249, H285, 305–307 (SRG), 346–349 (DALR), and E385 each bind substrate. Residue H389 participates in Zn(2+) binding. Residue Y412 coordinates substrate. Zn(2+) is bound at residue H453. Residues C535, C538, and C543 each contribute to the [4Fe-4S] cluster site.

This sequence belongs to the ThiC family. Requires [4Fe-4S] cluster as cofactor.

The enzyme catalyses 5-amino-1-(5-phospho-beta-D-ribosyl)imidazole + S-adenosyl-L-methionine = 4-amino-2-methyl-5-(phosphooxymethyl)pyrimidine + CO + 5'-deoxyadenosine + formate + L-methionine + 3 H(+). It participates in cofactor biosynthesis; thiamine diphosphate biosynthesis. In terms of biological role, catalyzes the synthesis of the hydroxymethylpyrimidine phosphate (HMP-P) moiety of thiamine from aminoimidazole ribotide (AIR) in a radical S-adenosyl-L-methionine (SAM)-dependent reaction. This Chlorobaculum parvum (strain DSM 263 / NCIMB 8327) (Chlorobium vibrioforme subsp. thiosulfatophilum) protein is Phosphomethylpyrimidine synthase.